Here is a 150-residue protein sequence, read N- to C-terminus: Large ribosomal subunit protein bL9 (150 aa).

The protein belongs to the bacterial ribosomal protein bL9 family.

Binds to the 23S rRNA. This is Large ribosomal subunit protein bL9 from Acidovorax ebreus (strain TPSY) (Diaphorobacter sp. (strain TPSY)).